Here is a 300-residue protein sequence, read N- to C-terminus: NAD kinase (300 aa).

Catalysis depends on aspartate 75, which acts as the Proton acceptor. Residues 75-76, 149-150, arginine 177, aspartate 179, 190-195, alanine 214, and glutamine 248 contribute to the NAD(+) site; these read DG, ND, and TAYALS.

This sequence belongs to the NAD kinase family. The cofactor is a divalent metal cation.

The protein resides in the cytoplasm. It catalyses the reaction NAD(+) + ATP = ADP + NADP(+) + H(+). Functionally, involved in the regulation of the intracellular balance of NAD and NADP, and is a key enzyme in the biosynthesis of NADP. Catalyzes specifically the phosphorylation on 2'-hydroxyl of the adenosine moiety of NAD to yield NADP. The polypeptide is NAD kinase (Burkholderia lata (strain ATCC 17760 / DSM 23089 / LMG 22485 / NCIMB 9086 / R18194 / 383)).